A 736-amino-acid polypeptide reads, in one-letter code: Probable methionine--tRNA ligase, cytoplasmic (736 aa).

Positions 25-35 match the 'HIGH' region motif; it reads PYVNNVPHLGN. Positions 346-350 match the 'KMSKS' region motif; that stretch reads KFSKS. Lys-349 contacts ATP. In terms of domain architecture, tRNA-binding spans 573-680; that stretch reads PEFPIDMKIA…QSIEAGSKIA (108 aa).

It belongs to the class-I aminoacyl-tRNA synthetase family.

Its subcellular location is the cytoplasm. It carries out the reaction tRNA(Met) + L-methionine + ATP = L-methionyl-tRNA(Met) + AMP + diphosphate. This Dictyostelium discoideum (Social amoeba) protein is Probable methionine--tRNA ligase, cytoplasmic (metS).